Reading from the N-terminus, the 356-residue chain is Competence protein ComGA (356 aa).

144 to 151 contacts ATP; that stretch reads GPTGSGKT.

The protein belongs to the GSP E family.

The protein resides in the cell membrane. Required for uptake of DNA by competent cells. The protein is Competence protein ComGA (comGA) of Bacillus subtilis (strain 168).